Here is a 130-residue protein sequence, read N- to C-terminus: Small ribosomal subunit protein uS11 (130 aa).

A disordered region spans residues Ile111–Ala130.

This sequence belongs to the universal ribosomal protein uS11 family. Part of the 30S ribosomal subunit. Interacts with proteins S7 and S18. Binds to IF-3.

Located on the platform of the 30S subunit, it bridges several disparate RNA helices of the 16S rRNA. Forms part of the Shine-Dalgarno cleft in the 70S ribosome. The polypeptide is Small ribosomal subunit protein uS11 (Lactobacillus acidophilus (strain ATCC 700396 / NCK56 / N2 / NCFM)).